A 197-amino-acid chain; its full sequence is Thymidylate kinase (197 aa).

Residue G7–S14 coordinates ATP.

Belongs to the thymidylate kinase family.

The enzyme catalyses dTMP + ATP = dTDP + ADP. Its function is as follows. Phosphorylation of dTMP to form dTDP in both de novo and salvage pathways of dTTP synthesis. In Thermotoga petrophila (strain ATCC BAA-488 / DSM 13995 / JCM 10881 / RKU-1), this protein is Thymidylate kinase.